The following is a 37-amino-acid chain: Large ribosomal subunit protein bL36 (37 aa).

Belongs to the bacterial ribosomal protein bL36 family.

The polypeptide is Large ribosomal subunit protein bL36 (Mycoplasma pneumoniae (strain ATCC 29342 / M129 / Subtype 1) (Mycoplasmoides pneumoniae)).